The chain runs to 154 residues: Putative pre-16S rRNA nuclease (154 aa).

It belongs to the YqgF nuclease family.

The protein localises to the cytoplasm. Could be a nuclease involved in processing of the 5'-end of pre-16S rRNA. The protein is Putative pre-16S rRNA nuclease of Ruegeria pomeroyi (strain ATCC 700808 / DSM 15171 / DSS-3) (Silicibacter pomeroyi).